We begin with the raw amino-acid sequence, 309 residues long: D-allose kinase (309 aa).

Residues 10 to 17 and 142 to 149 contribute to the ATP site; these read GVDMGATH and GMGFAVWM.

Belongs to the ROK (NagC/XylR) family.

The catalysed reaction is D-allose + ATP = D-allose 6-phosphate + ADP + H(+). It functions in the pathway carbohydrate degradation; D-allose degradation. In terms of biological role, catalyzes the phosphorylation of D-allose to D-allose 6-phosphate. Also has low level glucokinase activity in vitro. The sequence is that of D-allose kinase from Escherichia coli (strain K12).